Here is a 633-residue protein sequence, read N- to C-terminus: Chaperone protein dnaK2 (633 aa).

A Phosphothreonine; by autocatalysis modification is found at threonine 196. Positions 600-633 are disordered; the sequence is ATADGGPAQHAATGGPTSGGGGGDDVIDAEFDKG. A compositionally biased stretch (acidic residues) spans 624-633; that stretch reads DVIDAEFDKG.

The protein belongs to the heat shock protein 70 family.

Acts as a chaperone. The protein is Chaperone protein dnaK2 (dnaK2) of Streptomyces avermitilis (strain ATCC 31267 / DSM 46492 / JCM 5070 / NBRC 14893 / NCIMB 12804 / NRRL 8165 / MA-4680).